The chain runs to 689 residues: Transcription factor MYC2 (689 aa).

A JAZ-interaction domain region spans residues 94-172 (LQQRLQALID…VLRELNSLIS (79 aa)). The span at 316–349 (NTVQTNSVPSSNSNKQIAYGNENNHPSGNGQSCY) shows a compositional bias: polar residues. Disordered stretches follow at residues 316-361 (NTVQ…PQQQ) and 420-519 (QSQF…EAER). Positions 350–361 (NQQQQKNPPQQQ) are enriched in low complexity. The segment covering 471-495 (DSEHSDLEASVVKEADSSRVVEPEK) has biased composition (basic and acidic residues). Over residues 496 to 505 (RPRKRGRKPA) the composition is skewed to basic residues. A compositionally biased stretch (basic and acidic residues) spans 506–519 (NGREEPLNHVEAER). Residues 509–522 (EEPLNHVEAERQRR) form a basic motif; degenerate region. Residues 509-558 (EEPLNHVEAERQRREKLNQRFYALRAVVPNVSKMDKASLLGDAISYINEL) form the bHLH domain. The helix-loop-helix motif stretch occupies residues 523-558 (EKLNQRFYALRAVVPNVSKMDKASLLGDAISYINEL). A disordered region spans residues 563-602 (QNTESDKEDLKSQIEDLKKESRRPGPPPPPNQDLKMSSHT). Over residues 566 to 585 (ESDKEDLKSQIEDLKKESRR) the composition is skewed to basic and acidic residues.

As to quaternary structure, interacts (via N-terminus) with MED25. Interacts (via N-terminus) with JAZ7. MED25 and JAZ7 compete with each other to bind to MYC2. Interacts (via N-terminus) with MTB1. MTB1 and MED25 compete with each other to bind to MYC2. As to expression, expressed at low levels in roots, stems, leaves, flowers and fruits.

The protein localises to the nucleus. Transcriptional activator that binds to the G-box motif (5'-AACGTG-3') found in the promoter of the jasmonate-induced gene LAPA1. Acts as a negative regulator of blue light-mediated photomorphogenesis and positively regulates root growth. Promotes growth in response to the phytohormones abscisic acid (ABA) and jasmonate (JA). Binds to the G-box motif (5'-CACGTG-3') of the RBCS-3A gene promoter. Acts downstream of the jasmonate (JA) receptor to orchestrate JA-mediated activation of plant responses. Positively regulates both wound-responsive and pathogen-responsive genes through MYC2-targeted transcription factors (MTFs) involved in early response to JA. With JA2L forms a transcription module that regulates wounding-responsive genes. With ERF.C3 forms a transcription module that regulates pathogen-responsive genes. Plays a critical role in orchestrating JA-mediated defense gene expression during Botrytis cinerea infection. Negatively regulates defense responses to root-knot nematodes, potentially by mediating crosstalk among the hormones strigolactones, abscisic acid (ABA) and jasmonate (JA). Regulates the termination of JA-mediated defense responses by specifically binding the G-box (5'-CACATG-3') motifs in the promoters of MTB1, MTB2 and MTB3, which are transcription factors that negatively regulates JA signaling. May be involved in JA-induced chilling tolerance, possibly by ameliorating the antioxidant enzyme system of fruit and increasing proline and lycopene levels. The polypeptide is Transcription factor MYC2 (Solanum lycopersicum (Tomato)).